Here is a 55-residue protein sequence, read N- to C-terminus: Large ribosomal subunit protein bL33 (55 aa).

It belongs to the bacterial ribosomal protein bL33 family.

The polypeptide is Large ribosomal subunit protein bL33 (Deinococcus deserti (strain DSM 17065 / CIP 109153 / LMG 22923 / VCD115)).